The chain runs to 147 residues: Nucleoside diphosphate kinase (147 aa).

6 residues coordinate ATP: Lys9, Phe57, Arg85, Thr91, Arg102, and Asn112. The active-site Pros-phosphohistidine intermediate is His115.

It belongs to the NDK family. Homotetramer. The cofactor is Mg(2+).

It is found in the cytoplasm. The catalysed reaction is a 2'-deoxyribonucleoside 5'-diphosphate + ATP = a 2'-deoxyribonucleoside 5'-triphosphate + ADP. It catalyses the reaction a ribonucleoside 5'-diphosphate + ATP = a ribonucleoside 5'-triphosphate + ADP. Major role in the synthesis of nucleoside triphosphates other than ATP. The ATP gamma phosphate is transferred to the NDP beta phosphate via a ping-pong mechanism, using a phosphorylated active-site intermediate. This is Nucleoside diphosphate kinase from Listeria welshimeri serovar 6b (strain ATCC 35897 / DSM 20650 / CCUG 15529 / CIP 8149 / NCTC 11857 / SLCC 5334 / V8).